Reading from the N-terminus, the 136-residue chain is Histone H2A (136 aa).

The segment covering 1-11 (MTGGGKSGGKA) has biased composition (gly residues). The interval 1–24 (MTGGGKSGGKASGSKNAQSRSSKA) is disordered. 2 positions are modified to N6-acetyllysine: lysine 6 and lysine 10. Glutamine 107 is subject to N5-methylglutamine. Serine 133 carries the post-translational modification Phosphoserine. The [ST]-Q motif signature appears at 133–134 (SQ).

The protein belongs to the histone H2A family. In terms of assembly, the nucleosome is a histone octamer containing two molecules each of H2A, H2B, H3 and H4 assembled in one H3-H4 heterotetramer and two H2A-H2B heterodimers. The octamer wraps approximately 147 bp of DNA. Post-translationally, phosphorylated to form H2AS128ph (gamma-H2A) in response to DNA double-strand breaks (DSBs) generated by exogenous genotoxic agents and by stalled replication forks. Phosphorylation is dependent on the DNA damage checkpoint kinases MEC1/ATR and TEL1/ATM, spreads on either side of a detected DSB site and may mark the surrounding chromatin for recruitment of proteins required for DNA damage signaling and repair. Gamma-H2A is removed from the DNA prior to the strand invasion-primer extension step of the repair process and subsequently dephosphorylated. Dephosphorylation is necessary for efficient recovery from the DNA damage checkpoint. In terms of processing, acetylated by ESA1 to form H2AK4ac and H2AK7ac.

The protein resides in the nucleus. It is found in the chromosome. Core component of nucleosome which plays a central role in DNA double strand break (DSB) repair. Nucleosomes wrap and compact DNA into chromatin, limiting DNA accessibility to the cellular machineries which require DNA as a template. Histones thereby play a central role in transcription regulation, DNA repair, DNA replication and chromosomal stability. DNA accessibility is regulated via a complex set of post-translational modifications of histones, also called histone code, and nucleosome remodeling. The polypeptide is Histone H2A (HTA1) (Pyricularia oryzae (strain Y34) (Rice blast fungus)).